The primary structure comprises 591 residues: Aspartate--tRNA(Asp/Asn) ligase (591 aa).

E175 provides a ligand contact to L-aspartate. The tract at residues 199–202 (QQFK) is aspartate. R221 and H453 together coordinate L-aspartate. 221–223 (RDE) contributes to the ATP binding site. Residue E486 participates in ATP binding. R493 is a binding site for L-aspartate. ATP is bound at residue 538–541 (GIDR).

This sequence belongs to the class-II aminoacyl-tRNA synthetase family. Type 1 subfamily. In terms of assembly, homodimer.

It is found in the cytoplasm. The catalysed reaction is tRNA(Asx) + L-aspartate + ATP = L-aspartyl-tRNA(Asx) + AMP + diphosphate. Aspartyl-tRNA synthetase with relaxed tRNA specificity since it is able to aspartylate not only its cognate tRNA(Asp) but also tRNA(Asn). Reaction proceeds in two steps: L-aspartate is first activated by ATP to form Asp-AMP and then transferred to the acceptor end of tRNA(Asp/Asn). This Cereibacter sphaeroides (strain KD131 / KCTC 12085) (Rhodobacter sphaeroides) protein is Aspartate--tRNA(Asp/Asn) ligase.